The primary structure comprises 865 residues: Aconitate hydratase B (865 aa).

Substrate-binding positions include Arg-191, 244 to 246 (SSR), 414 to 416 (QDT), and Ser-498. [4Fe-4S] cluster is bound by residues Cys-710, Cys-769, and Cys-772. 2 residues coordinate substrate: Arg-791 and Arg-796.

Belongs to the aconitase/IPM isomerase family. Monomer. AcnB can also form a homodimer. The monomer-homodimer transition is dependent on iron availability and the carboxymethylation of C-273 inhibits the dimer formation. It depends on [4Fe-4S] cluster as a cofactor.

The catalysed reaction is citrate = D-threo-isocitrate. The enzyme catalyses (2S,3R)-3-hydroxybutane-1,2,3-tricarboxylate = 2-methyl-cis-aconitate + H2O. The protein operates within organic acid metabolism; propanoate degradation. It participates in carbohydrate metabolism; tricarboxylic acid cycle; isocitrate from oxaloacetate: step 2/2. Functionally, involved in the catabolism of short chain fatty acids (SCFA) via the tricarboxylic acid (TCA)(acetyl degradation route) and the 2-methylcitrate cycle I (propionate degradation route). Catalyzes the reversible isomerization of citrate to isocitrate via cis-aconitate. Also catalyzes the hydration of 2-methyl-cis-aconitate to yield (2R,3S)-2-methylisocitrate. The apo form of AcnB functions as a RNA-binding regulatory protein. During oxidative stress inactive AcnB apo-enzyme without iron sulfur clusters binds the acnB mRNA 3' UTRs (untranslated regions), stabilizes acnB mRNA and increases AcnB synthesis, thus mediating a post-transcriptional positive autoregulatory switch. AcnB also decreases the stability of the sodA transcript. In Escherichia coli (strain K12), this protein is Aconitate hydratase B.